Consider the following 353-residue polypeptide: UPF0283 membrane protein YcjF (353 aa).

Helical transmembrane passes span 70-90, 100-120, and 213-233; these read MVMG…VQWT, VALG…GSVV, and ESTL…FIAW.

This sequence belongs to the UPF0283 family.

Its subcellular location is the cell inner membrane. This chain is UPF0283 membrane protein YcjF, found in Escherichia fergusonii (strain ATCC 35469 / DSM 13698 / CCUG 18766 / IAM 14443 / JCM 21226 / LMG 7866 / NBRC 102419 / NCTC 12128 / CDC 0568-73).